Reading from the N-terminus, the 495-residue chain is Solute carrier family 2, facilitated glucose transporter member 3 (495 aa).

Residues 1-10 (MGTQKVTVSL) are Cytoplasmic-facing. A helical membrane pass occupies residues 11–32 (IFALSIATIGSFQFGYNTGVIN). The Extracellular segment spans residues 33–64 (APETIIKDFLNYTLEEKSENLPTEVLLTSLWS). An N-linked (GlcNAc...) asparagine glycan is attached at N43. The helical transmembrane segment at 65-85 (LSVAIFSVGGMIGSFSVGLFV) threads the bilayer. The Cytoplasmic portion of the chain corresponds to 86–90 (NRFGR). Residues 91-111 (RNSMLMVNLLAVAGGCLMGFC) form a helical membrane-spanning segment. Topologically, residues 112–118 (KIAQSVE) are extracellular. A helical transmembrane segment spans residues 119-142 (MLILGRLIIGLFCGLCTGFVPMYI). At 143–153 (GEISPTALRGA) the chain is on the cytoplasmic side. Residues 154–174 (FGTLNQLGIVIGILVAQIFGL) traverse the membrane as a helical segment. A D-glucose-binding site is contributed by Q159. Over 175 to 183 (KVIMGTEEL) the chain is Extracellular. The chain crosses the membrane as a helical span at residues 184 to 204 (WPLLLGFTIIPAVLQSAALPF). Residues 205 to 269 (CPESPRFLLI…LFRSRSYRQP (65 aa)) are Cytoplasmic-facing. Phosphothreonine is present on T232. A helical membrane pass occupies residues 270–290 (IIISIMLQLSQQLSGINAVFY). The interval 277–279 (QLS) is important for selectivity against fructose. D-glucose contacts are provided by residues 280-281 (QQ) and N286. At 291–304 (YSTGIFKDAGVEEP) the chain is on the extracellular side. A helical transmembrane segment spans residues 305-325 (IYATIGAGVVNTIFTVVSLFL). D-glucose is bound at residue N315. The Cytoplasmic portion of the chain corresponds to 326-331 (VERAGR). Residues 332 to 352 (RTLHMIGLGGMAVCSILMTIS) traverse the membrane as a helical segment. Over 353–363 (LLLKDNYNWMS) the chain is Extracellular. The helical transmembrane segment at 364 to 389 (FVCIGAILVFVAFFEIGPGPIPWFIV) threads the bilayer. E378 and W386 together coordinate D-glucose. The Cytoplasmic segment spans residues 390 to 399 (AELFSQGPRP). Residues 400–420 (AAMAVAGCSNWTSNFLVGLLF) form a helical membrane-spanning segment. The Extracellular segment spans residues 421–429 (PSAAFYLGA). Residues 430 to 450 (YVFIIFTGFLIVFLVFTFFKV) form a helical membrane-spanning segment. Residues 451–495 (PETRGRTFEEITRAFEGQGQDANRAEKGPIVEMNSMQPVKETATV) are Cytoplasmic-facing. S485 is modified (phosphoserine). T492 bears the Phosphothreonine mark.

Belongs to the major facilitator superfamily. Sugar transporter (TC 2.A.1.1) family. Glucose transporter subfamily. Interacts with SMIM43; the interaction may promote SLC2A3-mediated glucose transport to meet the energy needs of mesendoderm differentiation.

Its subcellular location is the cell membrane. The protein resides in the perikaryon. It localises to the cell projection. It carries out the reaction D-glucose(out) = D-glucose(in). The catalysed reaction is D-galactose(in) = D-galactose(out). With respect to regulation, deoxyglucose transport is inhibited by D-glucose, D-galactose and maltose. Galactose transport is inhibited by D-glucose and maltose. In terms of biological role, facilitative glucose transporter. Can also mediate the uptake of various other monosaccharides across the cell membrane. Mediates the uptake of glucose, 2-deoxyglucose, galactose, mannose, xylose and fucose, and probably also dehydroascorbate. Does not mediate fructose transport. Required for mesendoderm differentiation. The protein is Solute carrier family 2, facilitated glucose transporter member 3 of Canis lupus familiaris (Dog).